A 301-amino-acid polypeptide reads, in one-letter code: GTPase IMAP family member 3 (301 aa).

At 1 to 279 the chain is on the cytoplasmic side; that stretch reads METLQNVVTG…GKKLEVLHSD (279 aa). In terms of domain architecture, AIG1-type G spans 20-223; the sequence is SRPLRILLVG…HSNDLFLHAE (204 aa). Residues 29–37, S50, 147–149, and N184 each bind GTP; these read GKSGCGKSA and RKE. The required for targeting to the endoplasmic reticulum stretch occupies residues 263 to 301; sequence VLKVLPIGKKLEVLHSDFCWYLVLAILIFFVFFFLLFYV. The chain crosses the membrane as a helical; Anchor for type IV membrane protein span at residues 280–300; that stretch reads FCWYLVLAILIFFVFFFLLFY. Position 301 (V301) is a topological domain, lumenal.

This sequence belongs to the TRAFAC class TrmE-Era-EngA-EngB-Septin-like GTPase superfamily. AIG1/Toc34/Toc159-like paraseptin GTPase family. IAN subfamily. In terms of assembly, interacts with BAD, BAK1, BAX, BCL2, BCL2L1/Bcl-xL and BCL2L11/BimEL. The interaction with BAX is increased, when cells initiate apoptosis upon IL2 withdrawal. As to expression, expressed in thymus (in thymocytes), spleen (in splenocytes), lymph node and, at lower levels, in lung. Highly expressed in T lymphocytes.

Its subcellular location is the endoplasmic reticulum membrane. Functionally, during thymocyte development, may support the positive selection of CD4 and CD8 T cells. May play a role in mitochondrial DNA segregation in hematopoietic tissues. Binds GTP. The chain is GTPase IMAP family member 3 (Gimap3) from Mus musculus (Mouse).